Consider the following 363-residue polypeptide: Transcription factor IIIA (363 aa).

9 C2H2-type zinc fingers span residues 38–62 (FICSFPDCSASYNKAWKLDAHLCKH), 68–92 (FVCDYEGCGKAFIRDYHLSRHILIH), 98–123 (FVCADNGCNQKFSTKSNLKKHIERKH), 130–154 (YVCNFEGCKKAFKKHQQLRTHQCQH), 160–184 (FRCTHEGCGKHFASPSRLKRHGKVH), 187–211 (YLCQKGCSFVGKTWTELLKHTREAH), 215–237 (VTCTVCQKMFKRKDHLKQHMKTH), 244–269 (YRCPREGCARTYTTVFNLQSHILSFH), and 275–299 (FVCEHAGCGKTFAMKQSLMRHSVVH). A disordered region spans residues 301 to 363 (PDKKRMKLKV…LAPAALLTVH (63 aa)). Residues 338–350 (SLPNSTESSSSPE) are compositionally biased toward low complexity.

It is found in the nucleus. Functionally, involved in ribosomal large subunit biogenesis. Binds the approximately 50 base pairs internal control region (ICR) of 5S ribosomal RNA genes. It is required for their RNA polymerase III-dependent transcription and may also maintain the transcription of other genes. Also binds the transcribed 5S RNA's. This Rattus norvegicus (Rat) protein is Transcription factor IIIA (Gtf3a).